Here is a 465-residue protein sequence, read N- to C-terminus: Iron-sulfur cluster assembly SufBD family protein SH2035 (465 aa).

Belongs to the iron-sulfur cluster assembly SufBD family.

The chain is Iron-sulfur cluster assembly SufBD family protein SH2035 from Staphylococcus haemolyticus (strain JCSC1435).